A 406-amino-acid polypeptide reads, in one-letter code: Argininosuccinate synthase (406 aa).

ATP-binding positions include 14–22 (AYSGGLDTS) and Ala41. Residues Tyr92 and Ser97 each contribute to the L-citrulline site. Position 122 (Gly122) interacts with ATP. Positions 124, 128, and 129 each coordinate L-aspartate. Position 128 (Asn128) interacts with L-citrulline. L-citrulline is bound by residues Arg132, Ser181, Ser190, Glu266, and Tyr278.

The protein belongs to the argininosuccinate synthase family. Type 1 subfamily. In terms of assembly, homotetramer.

The protein resides in the cytoplasm. The catalysed reaction is L-citrulline + L-aspartate + ATP = 2-(N(omega)-L-arginino)succinate + AMP + diphosphate + H(+). It functions in the pathway amino-acid biosynthesis; L-arginine biosynthesis; L-arginine from L-ornithine and carbamoyl phosphate: step 2/3. This Geobacter metallireducens (strain ATCC 53774 / DSM 7210 / GS-15) protein is Argininosuccinate synthase.